A 521-amino-acid polypeptide reads, in one-letter code: MMLMMLPFIGSVSVSESLVAMTTVCLVYLILKFFQTEIPEGLRRLPGPKPLPIIGNVLEMGSRPYLSLTAMSKRYGNVFQIQIGMRPVVVLSGSETVRQALIKQGDDFAGRPDLYSFRFINEGKSLAFSTDKAGIWRARRKLAYSALRSFATLEGTTPEYSCVLEEHVCKEGEYLIKQLNTAMTADGSFDPFRHIVVSVANVICGMCFGRRYDHDDQELVGLVTLSDEFGRVVGSGNPADFIPILQYLPSATMKNFLRINGRFTEFVQKIVTEHYTTFDKDNIRDITDSLIDHCEDRKLDENSNVQMSDEKIVGIVNDLFGAGFDTVSTALSWSVMYLVAHPEIQERLYQEIEDKVGLDRMPLLSDKPNLPFLEAFILEILRHSSFLPFTIPHCTTKDTSLNGYFIPKDTCVFINQWQINHDPEMWKDPSSFNPDRFLSADGSEVNKLDGEKVMAFGMGKRRCIGEVIARNEVYLFLAILIQKLHFLPIPGEKLDMTPEYGLTMKHKRCHLKATMRARNEH.

A substrate-binding site is contributed by Phe229. A heme-binding site is contributed by Cys463.

The protein belongs to the cytochrome P450 family. Requires heme as cofactor.

The protein resides in the endoplasmic reticulum membrane. It localises to the microsome membrane. It carries out the reaction an organic molecule + reduced [NADPH--hemoprotein reductase] + O2 = an alcohol + oxidized [NADPH--hemoprotein reductase] + H2O + H(+). Cytochromes P450 are a group of heme-thiolate monooxygenases. They oxidize a variety of structurally unrelated compounds, including steroids, fatty acids, and xenobiotics. In Limanda limanda (Common dab), this protein is Cytochrome P450 1A1 (cyp1a1).